A 208-amino-acid chain; its full sequence is Probable Brix domain-containing ribosomal biogenesis protein (208 aa).

A Brix domain is found at 1-196 (MMLITTSHRP…IWIMEDGRRW (196 aa)).

Probably involved in the biogenesis of the ribosome. This chain is Probable Brix domain-containing ribosomal biogenesis protein, found in Thermococcus kodakarensis (strain ATCC BAA-918 / JCM 12380 / KOD1) (Pyrococcus kodakaraensis (strain KOD1)).